A 234-amino-acid chain; its full sequence is Interleukin-34 (234 aa).

The signal sequence occupies residues 1 to 20 (MPQGLAWLRYLGILLGMALG). N-linked (GlcNAc...) asparagine glycosylation is present at N76. The interval 191 to 234 (EAPQPQPRSPASAQCEAAQLYPLPQPPSTSLPRVLGPSAGPPTQ) is disordered.

The protein belongs to the IL-34 family. Homodimer. Interacts with CSF1R.

Its subcellular location is the secreted. Cytokine that promotes the proliferation, survival and differentiation of monocytes and macrophages. Promotes the release of pro-inflammatory chemokines, and thereby plays an important role in innate immunity and in inflammatory processes. Plays an important role in the regulation of osteoclast proliferation and differentiation, and in the regulation of bone resorption. Signaling via CSF1R and its downstream effectors stimulates phosphorylation of MAPK1/ERK2 AND MAPK3/ERK1. The protein is Interleukin-34 of Bos taurus (Bovine).